The chain runs to 374 residues: Probable neutral protease 2 homolog TRV_05367 (374 aa).

Positions 1 to 19 are cleaved as a signal peptide; the sequence is MQVIVALAALGSLAAPALG. The propeptide occupies 20–189; sequence FSIPRGVPVS…RGPLTRINKR (170 aa). 2 disulfide bridges follow: cysteine 197-cysteine 267 and cysteine 274-cysteine 292. Histidine 317 is a binding site for Zn(2+). Glutamate 318 is a catalytic residue. Zn(2+)-binding residues include histidine 321 and aspartate 332.

The protein belongs to the peptidase M35 family. Zn(2+) serves as cofactor.

It is found in the secreted. The enzyme catalyses Preferential cleavage of bonds with hydrophobic residues in P1'. Also 3-Asn-|-Gln-4 and 8-Gly-|-Ser-9 bonds in insulin B chain.. In terms of biological role, probable secreted metalloprotease that shows high activities on basic nuclear substrates such as histone and protamine. May be involved in virulence. The sequence is that of Probable neutral protease 2 homolog TRV_05367 from Trichophyton verrucosum (strain HKI 0517).